A 994-amino-acid chain; its full sequence is Tyrosine-protein kinase Mer (994 aa).

Residues 1 to 18 (MVLAPLLLGLLLLPALWS) form the signal peptide. Topologically, residues 19–497 (GGTAEKWEET…TPAPGNTDSM (479 aa)) are extracellular. Residues 44 to 78 (VNHRPFSAPHSSRDQLPPPQTGRSHPAHTAAPQVT) form a disordered region. Ig-like C2-type domains lie at 75–181 (PQVT…EIVS) and 192–268 (PYFI…LTVS). 15 N-linked (GlcNAc...) asparagine glycosylation sites follow: N91, N108, N165, N202, N210, N229, N289, N311, N324, N331, N349, N384, N390, N437, and N449. A disulfide bridge connects residues C109 and C170. C213 and C257 form a disulfide bridge. 2 consecutive Fibronectin type-III domains span residues 281–376 (PPTE…TTEG) and 381–478 (APLN…IPEH). A helical transmembrane segment spans residues 498–518 (FIILGCFCGFILIGLILCISL). At 519–994 (ALRRRVQETK…DSLEDSEVLM (476 aa)) the chain is on the cytoplasmic side. S538 is modified (phosphoserine). Positions 582–852 (LVLGKVLGEG…SVLRLQLEKL (271 aa)) constitute a Protein kinase domain. ATP-binding positions include 588–596 (LGEGEFGSV) and K610. Catalysis depends on D718, which acts as the Proton acceptor. Residues Y744, Y748, Y749, and Y867 each carry the phosphotyrosine; by autocatalysis modification.

It belongs to the protein kinase superfamily. Tyr protein kinase family. AXL/UFO subfamily. In terms of assembly, interacts (upon activation) with TNK2; stimulates TNK2 autophosphorylation. Interacts (via N-terminus) with extracellular ligands LGALS3, TUB, TULP1 and GAS6. Interacts with VAV1 in a phosphotyrosine-independent manner. Interacts with TIMD4; this interaction enhances TIMD4-mediated efferocytosis. In terms of processing, autophosphorylated on Tyr-744, Tyr-748 and Tyr-749 in the activation loop allowing full activity. Autophosphorylated on Tyr-867 leading to recruitment of downstream partners of the signaling cascade such as PLCG2. As to expression, expressed predominantly in the hematopoietic lineages: macrophages, NK cells, NKT cells, dendritic cells and platelets.

The protein resides in the cell membrane. It carries out the reaction L-tyrosyl-[protein] + ATP = O-phospho-L-tyrosyl-[protein] + ADP + H(+). Receptor tyrosine kinase that transduces signals from the extracellular matrix into the cytoplasm by binding to several ligands including LGALS3, TUB, TULP1 or GAS6. Regulates many physiological processes including cell survival, migration, differentiation, and phagocytosis of apoptotic cells (efferocytosis). Ligand binding at the cell surface induces autophosphorylation of MERTK on its intracellular domain that provides docking sites for downstream signaling molecules. Following activation by ligand, interacts with GRB2 or PLCG2 and induces phosphorylation of MAPK1, MAPK2, FAK/PTK2 or RAC1. MERTK signaling plays a role in various processes such as macrophage clearance of apoptotic cells, platelet aggregation, cytoskeleton reorganization and engulfment. Functions in the retinal pigment epithelium (RPE) as a regulator of rod outer segments fragments phagocytosis. Also plays an important role in inhibition of Toll-like receptors (TLRs)-mediated innate immune response by activating STAT1, which selectively induces production of suppressors of cytokine signaling SOCS1 and SOCS3. The polypeptide is Tyrosine-protein kinase Mer (Mertk) (Mus musculus (Mouse)).